The primary structure comprises 75 residues: ATP synthase subunit c (75 aa).

The next 2 helical transmembrane spans lie at 4 to 24 (GLIA…GLGQ) and 54 to 74 (AVAE…MFAF).

Belongs to the ATPase C chain family. F-type ATPases have 2 components, F(1) - the catalytic core - and F(0) - the membrane proton channel. F(1) has five subunits: alpha(3), beta(3), gamma(1), delta(1), epsilon(1). F(0) has three main subunits: a(1), b(2) and c(10-14). The alpha and beta chains form an alternating ring which encloses part of the gamma chain. F(1) is attached to F(0) by a central stalk formed by the gamma and epsilon chains, while a peripheral stalk is formed by the delta and b chains.

It is found in the cell membrane. In terms of biological role, f(1)F(0) ATP synthase produces ATP from ADP in the presence of a proton or sodium gradient. F-type ATPases consist of two structural domains, F(1) containing the extramembraneous catalytic core and F(0) containing the membrane proton channel, linked together by a central stalk and a peripheral stalk. During catalysis, ATP synthesis in the catalytic domain of F(1) is coupled via a rotary mechanism of the central stalk subunits to proton translocation. Its function is as follows. Key component of the F(0) channel; it plays a direct role in translocation across the membrane. A homomeric c-ring of between 10-14 subunits forms the central stalk rotor element with the F(1) delta and epsilon subunits. This Mycoplasmopsis agalactiae (strain NCTC 10123 / CIP 59.7 / PG2) (Mycoplasma agalactiae) protein is ATP synthase subunit c.